The sequence spans 495 residues: uncharacterized protein (495 aa).

The span at 305-317 shows a compositional bias: low complexity; that stretch reads DYNNNNNENYSGS. Residues 305–404 form a disordered region; that stretch reads DYNNNNNENY…LDEEDNRKNK (100 aa). The span at 335–347 shows a compositional bias: acidic residues; the sequence is YDNDENNDDENND. The segment covering 348–363 has biased composition (low complexity); sequence ENNNNNNNNNNNNNNN. The span at 386 to 398 shows a compositional bias: acidic residues; that stretch reads SDDDEADNELDEE.

This is an uncharacterized protein from Dictyostelium discoideum (Social amoeba).